Consider the following 198-residue polypeptide: A-type ATP synthase subunit E (198 aa).

This sequence belongs to the V-ATPase E subunit family. Has multiple subunits with at least A(3), B(3), C, D, E, F, H, I and proteolipid K(x).

The protein localises to the cell membrane. In terms of biological role, component of the A-type ATP synthase that produces ATP from ADP in the presence of a proton gradient across the membrane. The protein is A-type ATP synthase subunit E of Pyrococcus horikoshii (strain ATCC 700860 / DSM 12428 / JCM 9974 / NBRC 100139 / OT-3).